The primary structure comprises 587 residues: Proline-rich protein 14 (587 aa).

N-acetylmethionine is present on M1. The span at 1 to 11 (MDLPGDSSTPG) shows a compositional bias: polar residues. Disordered stretches follow at residues 1 to 48 (MDLP…EKAS), 65 to 152 (VPLE…HQPT), and 181 to 241 (ARRA…RPRL). The segment at 1 to 135 (MDLPGDSSTP…TPRRQSRTTP (135 aa)) is sufficient for heterochromatin association in interphase and chromatin association in anaphase. The tract at residues 85–378 (SVRSQPPASP…MAKAPPPPRP (294 aa)) is required for the interaction with GRB2 and sufficient to promote the phosphorylation of AKT and cell proliferation. Residues 136 to 365 (GPDEGPSQKV…RPRPRRHTVG (230 aa)) are required for nuclear lamina association. The span at 200–214 (LPAPSRPSALSANPL) shows a compositional bias: low complexity. Over residues 215 to 234 (ASPPPAPDPVLEPPSTPPPS) the composition is skewed to pro residues. At S277 the chain carries Phosphoserine. Disordered regions lie at residues 290–444 (EAGQ…IGKV) and 524–587 (FRDS…PHRT). Over residues 314 to 325 (AQDQNPSATLTK) the composition is skewed to polar residues. Positions 337-356 (LGPPGPDPCSWPPVPAPSSR) are enriched in pro residues. Over residues 398–410 (TSCSSTASTSSFS) the composition is skewed to low complexity. The interval 519 to 536 (RRTVEFRDSSLPRSRRPS) is required for nuclear localization. The span at 538–548 (GARATAGRTLP) shows a compositional bias: low complexity. The span at 572–581 (LLEEEEEGDQ) shows a compositional bias: acidic residues.

Interacts (via proline-rich region) with GRB2 (via SH3 domain 2). Interacts (via N-terminus) with CBX5.

It localises to the chromosome. It is found in the nucleus. The protein localises to the nucleus lamina. Its subcellular location is the nucleoplasm. Its function is as follows. Functions in tethering peripheral heterochromatin to the nuclear lamina during interphase, possibly through the interaction with heterochromatin protein CBX5/HP1 alpha. Might play a role in reattaching heterochromatin to the nuclear lamina at mitotic exit. Promotes myoblast differentiation during skeletal myogenesis, possibly by stimulating transcription factor MyoD activity via binding to CBX5/HP1 alpha. Involved in the positive regulation of the PI3K-Akt-mTOR signaling pathway and in promoting cell proliferation, possibly via binding to GRB2. The protein is Proline-rich protein 14 (PRR14) of Bos taurus (Bovine).